The primary structure comprises 160 residues: S-ribosylhomocysteine lyase (160 aa).

Residues histidine 57, histidine 61, and cysteine 127 each coordinate Fe cation.

It belongs to the LuxS family. As to quaternary structure, homodimer. It depends on Fe cation as a cofactor.

The enzyme catalyses S-(5-deoxy-D-ribos-5-yl)-L-homocysteine = (S)-4,5-dihydroxypentane-2,3-dione + L-homocysteine. Involved in the synthesis of autoinducer 2 (AI-2) which is secreted by bacteria and is used to communicate both the cell density and the metabolic potential of the environment. The regulation of gene expression in response to changes in cell density is called quorum sensing. Catalyzes the transformation of S-ribosylhomocysteine (RHC) to homocysteine (HC) and 4,5-dihydroxy-2,3-pentadione (DPD). The sequence is that of S-ribosylhomocysteine lyase from Streptococcus pyogenes serotype M2 (strain MGAS10270).